Reading from the N-terminus, the 816-residue chain is Phosphatidylinositol 4-kinase beta (816 aa).

Disordered regions lie at residues 1–30 (MGDT…GSLL), 99–120 (EEED…RRRR), and 248–318 (AHRK…SFSS). Position 2 is an N-acetylglycine (Gly-2). Positions 2–68 (GDTVVEPAPL…VKLLHGGVAV (67 aa)) are interaction with ACBD3. Residues 52 to 242 (CQDVLEKVKL…GTKLRKLILS (191 aa)) enclose the PIK helical domain. A Phosphoserine modification is found at Ser-258. The residue at position 263 (Thr-263) is a Phosphothreonine. Ser-266, Ser-275, Ser-277, Ser-284, and Ser-294 each carry phosphoserine. 2 stretches are compositionally biased toward polar residues: residues 278–297 (DATA…SNPK) and 306–318 (SSST…SFSS). At Ser-428 the chain carries Phosphoserine. Thr-438 carries the post-translational modification Phosphothreonine. Phosphoserine is present on Ser-511. Phosphothreonine is present on residues Thr-517 and Thr-519. One can recognise a PI3K/PI4K catalytic domain in the interval 535–801 (EPWQEKVRRI…MVDGSMRSIT (267 aa)). The tract at residues 541-547 (VRRIREG) is G-loop. The tract at residues 668–676 (QVKDRHNGN) is catalytic loop. Residues 687–711 (HIDFGFILSSSPRNLGFETSAFKLT) are activation loop.

It belongs to the PI3/PI4-kinase family. Type III PI4K subfamily. In terms of assembly, interacts with ARF1 and ARF3 in the Golgi complex, but not with ARF4, ARF5 or ARF6. Interacts with NCS1/FREQ in a calcium-independent manner. Interacts with CALN1/CABP8 and CALN2/CABP7; in a calcium-dependent manner; this interaction competes with NCS1/FREQ binding. Interacts with ACBD3. Interacts with ARMH3, YWHAB, YWHAE, YWHAG, YWHAH, YWHAQ, YWHAZ and SFN. Interacts with GGA2 (via VHS domain); the interaction is important for PI4KB location at the Golgi apparatus membrane. Interacts with ATG9A. Requires Mg(2+) as cofactor. The cofactor is Mn(2+).

Its subcellular location is the endomembrane system. It localises to the mitochondrion outer membrane. The protein localises to the rough endoplasmic reticulum membrane. It is found in the golgi apparatus. The protein resides in the golgi apparatus membrane. It catalyses the reaction a 1,2-diacyl-sn-glycero-3-phospho-(1D-myo-inositol) + ATP = a 1,2-diacyl-sn-glycero-3-phospho-(1D-myo-inositol 4-phosphate) + ADP + H(+). Its activity is regulated as follows. Inhibited by wortmannin. Increased kinase activity upon interaction with NCS1/FREQ. Functionally, phosphorylates phosphatidylinositol (PI) in the first committed step in the production of the second messenger inositol-1,4,5,-trisphosphate (PIP). May regulate Golgi disintegration/reorganization during mitosis, possibly via its phosphorylation. Involved in Golgi-to-plasma membrane trafficking. This Callithrix jacchus (White-tufted-ear marmoset) protein is Phosphatidylinositol 4-kinase beta (PI4KB).